The sequence spans 368 residues: CST complex subunit STN1 (368 aa).

Positions 2-192 are interaction with CTC1; it reads AVSLGDDDAD…KCYDQPFKMP (191 aa). Residues 58–162 constitute a DNA-binding region (OB); sequence VDVLGIVVYK…EIKATSFYKV (105 aa). 2 winged helix-turn-helix (wHTH) regions span residues 201–295 and 296–368; these read AGGS…NVTE and QDKD…YIVL.

It belongs to the CTC1 family. In terms of assembly, component of the CST complex.

Its subcellular location is the nucleus. The protein localises to the chromosome. It localises to the telomere. Functionally, component of the CST complex proposed to act as a specialized replication factor promoting DNA replication under conditions of replication stress or natural replication barriers such as the telomere duplex. The CST complex binds single-stranded DNA with high affinity in a sequence-independent manner, while isolated subunits bind DNA with low affinity by themselves. Initially the CST complex has been proposed to protect telomeres from DNA degradation. However, the CST complex has been shown to be involved in several aspects of telomere replication. This is CST complex subunit STN1 from Danio rerio (Zebrafish).